The primary structure comprises 479 residues: Protein kinase 2 (479 aa).

Residues 1–136 (MGKGQSKIKN…NGNDDEDEGP (136 aa)) form a disordered region. 2 stretches are compositionally biased toward low complexity: residues 52 to 65 (AQQQ…TTAA) and 79 to 96 (IPAP…TPTI). A compositionally biased stretch (polar residues) spans 102-115 (NTDNNNINGASNEA). The Protein kinase domain occupies 153–407 (FELLNVIGKG…GGEVKQHPWF (255 aa)). Residues 159 to 167 (IGKGSFGKV) and K182 each bind ATP. Residue D276 is the Proton acceptor of the active site. Position 309 is a phosphothreonine; by autocatalysis (T309). In terms of domain architecture, AGC-kinase C-terminal spans 408 to 479 (KNIDWEKLDR…TYVADSILKD (72 aa)). T470 bears the Phosphothreonine mark.

It belongs to the protein kinase superfamily. AGC Ser/Thr protein kinase family. S6 kinase subfamily. Post-translationally, seems to be myristoylated.

The protein resides in the cytoplasm. Its subcellular location is the cell membrane. It carries out the reaction L-seryl-[protein] + ATP = O-phospho-L-seryl-[protein] + ADP + H(+). It catalyses the reaction L-threonyl-[protein] + ATP = O-phospho-L-threonyl-[protein] + ADP + H(+). Required for morphogenesis during multicellular development. Phosphorylates talB, gefN, gefS, PI4P 5-kinase and gacQ. The protein is Protein kinase 2 (pkgB) of Dictyostelium discoideum (Social amoeba).